Consider the following 240-residue polypeptide: Uridylate kinase (240 aa).

Position 13–16 (13–16 (KLSG)) interacts with ATP. The interval 21 to 26 (GEKGFG) is involved in allosteric activation by GTP. G55 is a UMP binding site. Positions 56 and 60 each coordinate ATP. UMP-binding positions include D75 and 136–143 (IGNPYFST). ATP-binding residues include N164, Y170, and D173.

This sequence belongs to the UMP kinase family. In terms of assembly, homohexamer.

It localises to the cytoplasm. The enzyme catalyses UMP + ATP = UDP + ADP. The protein operates within pyrimidine metabolism; CTP biosynthesis via de novo pathway; UDP from UMP (UMPK route): step 1/1. Allosterically activated by GTP. Inhibited by UTP. Catalyzes the reversible phosphorylation of UMP to UDP. The protein is Uridylate kinase of Staphylococcus aureus (strain Newman).